We begin with the raw amino-acid sequence, 310 residues long: MKKCRFLVLLLLAFVGLAACSSQKSSTETGSSKLNVVATNSIIADITKNIAGDKINLHSIVPVGQDPHEYEPLPEDVKKTSQADLIFYNGINLETGGNAWFTKLVENAKKKENKDYYAVSEGVDVIYLEGQSEKGKEDPHAWLNLENGIIYAQNIAKRLSEKDPANKETYEKNLKAYVEKLSALDKEAKEKFNNIPGEKKMIVTSEGCFKYFSKAYNVPSAYIWEINTEEEGTPDQIKTLVEKLRKTKVPSLFVESSVDDRPMKTVSKDTNIPIYAKIFTDSVAEKGEEGDSYYSMMKYNLEKIAEGLSK.

The first 19 residues, 1–19 (MKKCRFLVLLLLAFVGLAA), serve as a signal peptide directing secretion. A lipid anchor (N-palmitoyl cysteine) is attached at cysteine 20. The S-diacylglycerol cysteine moiety is linked to residue cysteine 20. Positions 68, 140, 206, and 281 each coordinate a divalent metal cation.

This sequence belongs to the bacterial solute-binding protein 9 family.

The protein localises to the cell membrane. Part of an ATP-binding cassette (ABC) transport system involved in metal import. Binds a metal with high affinity and specificity and delivers it to the membrane permease for translocation into the cytoplasm. Part of an ATP-driven transport system for manganese. Does not exhibit adhesion properties. The chain is Metal ABC transporter substrate-binding lipoprotein ScbA (scbA) from Streptococcus cristatus.